The primary structure comprises 174 residues: Major allergen Can f 1 (174 aa).

The signal sequence occupies residues 1–18 (MKTLLLTIGFSLIAILQA). An intrachain disulfide couples Cys78 to Cys169. An N-linked (GlcNAc...) asparagine glycan is attached at Asn80.

This sequence belongs to the calycin superfamily. Lipocalin family. In terms of tissue distribution, tongue epithelial tissue.

The protein resides in the secreted. The polypeptide is Major allergen Can f 1 (Canis lupus familiaris (Dog)).